A 516-amino-acid chain; its full sequence is MLIKIVIACVITAIIVALIAWKSAISYYKKVVEGKIGSADEKAREIIDEALKTAETKKREALLEAKEESLKTKNELERETKERRAELQRYEKRVLTKEETLDRKTEALEKKEAKLVAKEQELDRLRVEVEESHQKQVAELEKISGLTSEQAKEYLIKTVEDEVKHETAVLIKELESRAKEEAEKKAKDYVVTAIQKCAADHVAETTISVVQLPNDEMKGRIIGREGRNIRTLETLTGVDLIIDDTPEAVILSGFDPIRRETARIALEKLIVDGRIHPARIEEMVEKAQKEVETMIREEGEAATLEVGVHGIHPELVRLLGKMKFRTSYGQNALKHSIEVAILSGLLAGEIGVDVRIAKRAGLLHDIGKSVDHEMEGTHVQIGVDLCRKYKESPIVINAVEAHHGDVEFQSLIACIVQAADTISAARPGARRETLETYTNRLKQLEDITNGFKGVDKSFAIQAGREVRVMVVPDQVTDDDMVLLARDLSKKIESELEYPGMIKVNVIRESRVTDYAK.

A helical membrane pass occupies residues 1–21 (MLIKIVIACVITAIIVALIAW). Residues 206 to 269 (TISVVQLPND…ETARIALEKL (64 aa)) form the KH domain. In terms of domain architecture, HD spans 332-425 (ALKHSIEVAI…VQAADTISAA (94 aa)).

This sequence belongs to the RNase Y family.

It localises to the cell membrane. In terms of biological role, endoribonuclease that initiates mRNA decay. This is Ribonuclease Y from Lachnoclostridium phytofermentans (strain ATCC 700394 / DSM 18823 / ISDg) (Clostridium phytofermentans).